A 1381-amino-acid polypeptide reads, in one-letter code: Hepatocyte growth factor receptor (1381 aa).

Positions 1 to 24 are cleaved as a signal peptide; the sequence is MKAPAVLAPGILVLLFTLVQKSDG. Residues 25-934 lie on the Extracellular side of the membrane; sequence ECKEALVKSE…VQPDQNFTGL (910 aa). Positions 27–515 constitute a Sema domain; that stretch reads KEALVKSEMN…TGKKITKIPL (489 aa). Asparagine 45 is a glycosylation site (N-linked (GlcNAc...) asparagine). 4 disulfides stabilise this stretch: cysteine 95-cysteine 101, cysteine 98-cysteine 160, cysteine 133-cysteine 141, and cysteine 172-cysteine 175. Residue asparagine 106 is glycosylated (N-linked (GlcNAc...) asparagine). Asparagine 202 and asparagine 358 each carry an N-linked (GlcNAc...) asparagine glycan. 2 disulfide bridges follow: cysteine 298/cysteine 363 and cysteine 385/cysteine 397. N-linked (GlcNAc...) asparagine glycans are attached at residues asparagine 399, asparagine 405, and asparagine 449. Disulfide bonds link cysteine 520–cysteine 538, cysteine 526–cysteine 561, cysteine 529–cysteine 545, and cysteine 541–cysteine 551. Residue asparagine 553 is glycosylated (N-linked (GlcNAc...) asparagine). IPT/TIG domains are found at residues 563 to 655, 657 to 739, and 742 to 836; these read PTIY…FSYV, PIIT…FSYR, and PIVY…LIYV. The O-linked (Man) threonine glycan is linked to threonine 582. N-linked (GlcNAc...) asparagine glycosylation is found at asparagine 607 and asparagine 635. Threonine 676 and threonine 761 each carry an O-linked (Man) threonine glycan. N-linked (GlcNAc...) asparagine glycosylation is found at asparagine 785, asparagine 879, and asparagine 930. Residues 935-955 traverse the membrane as a helical segment; it reads IVGVVSISIILLLLLGLFLWL. Residues 956–1381 lie on the Cytoplasmic side of the membrane; that stretch reads KRRKQIKDLG…QDNVDGEVDT (426 aa). Serine 966 carries the phosphoserine modification. Threonine 977 is modified (phosphothreonine). Residues serine 990, serine 997, and serine 1000 each carry the phosphoserine modification. Tyrosine 1003 is subject to Phosphotyrosine. The region spanning 1078 to 1345 is the Protein kinase domain; that stretch reads VHFNEVIGRG…RISAIFSTFI (268 aa). ATP is bound by residues 1084 to 1092 and lysine 1110; that span reads IGRGHFGCV. Residue aspartate 1204 is the Proton acceptor of the active site. The interval 1212–1381 is interaction with RANBP9; that stretch reads LDEKFTVKVA…QDNVDGEVDT (170 aa). Residue tyrosine 1230 is modified to Phosphotyrosine. 2 positions are modified to phosphotyrosine; by autocatalysis: tyrosine 1234 and tyrosine 1235. Threonine 1289 carries the phosphothreonine modification. The segment at 1320–1359 is interaction with MUC20; that stretch reads WHPKAELRPSFSELVSRISAIFSTFIGEHYVHVNATYVNV. Phosphotyrosine; by autocatalysis occurs at positions 1349 and 1356. Tyrosine 1365 bears the Phosphotyrosine mark.

It belongs to the protein kinase superfamily. Tyr protein kinase family. In terms of assembly, heterodimer made of an alpha chain (50 kDa) and a beta chain (145 kDa) which are disulfide linked. Binds PLXNB1. Interacts when phosphorylated with downstream effectors including STAT3, PIK3R1, SRC, PCLG1, GRB2 and GAB1. Interacts with SPSB1, SPSB2 and SPSB4. Interacts with INPP5D/SHIP1. When phosphorylated at Tyr-1356, interacts with INPPL1/SHIP2. Interacts with RANBP9 and RANBP10, as well as SPSB1, SPSB2, SPSB3 and SPSB4. SPSB1 binding occurs in the presence and in the absence of HGF, however HGF treatment has a positive effect on this interaction. Interacts with MUC20; prevents interaction with GRB2 and suppresses hepatocyte growth factor-induced cell proliferation. Interacts with GRB10. Interacts with PTPN1 and PTPN2. Interacts with HSP90AA1 and HSP90AB1; the interaction suppresses MET kinase activity. Interacts with tensin TNS3. Interacts (when phosphorylated) with tensin TNS4 (via SH2 domain); the interaction increases MET protein stability by inhibiting MET endocytosis and subsequent lysosomal degradation. Post-translationally, autophosphorylated in response to ligand binding on Tyr-1234 and Tyr-1235 in the kinase domain leading to further phosphorylation of Tyr-1349 and Tyr-1356 in the C-terminal multifunctional docking site. Dephosphorylated by PTPRJ at Tyr-1349 and Tyr-1365. Dephosphorylated by PTPN1 and PTPN2. In terms of processing, ubiquitinated. Ubiquitination by CBL regulates the receptor stability and activity through proteasomal degradation. O-mannosylation of IPT/TIG domains by TMEM260 is required for protein maturation. O-mannosylated residues are composed of single mannose glycans that are not elongated or modified.

The protein localises to the membrane. The enzyme catalyses L-tyrosyl-[protein] + ATP = O-phospho-L-tyrosyl-[protein] + ADP + H(+). With respect to regulation, in its inactive state, the C-terminal tail interacts with the catalytic domain and inhibits the kinase activity. Upon ligand binding, the C-terminal tail is displaced and becomes phosphorylated, thus increasing the kinase activity. Receptor tyrosine kinase that transduces signals from the extracellular matrix into the cytoplasm by binding to hepatocyte growth factor/HGF ligand. Regulates many physiological processes including proliferation, scattering, morphogenesis and survival. Ligand binding at the cell surface induces autophosphorylation of MET on its intracellular domain that provides docking sites for downstream signaling molecules. Following activation by ligand, interacts with the PI3-kinase subunit PIK3R1, PLCG1, SRC, GRB2, STAT3 or the adapter GAB1. Recruitment of these downstream effectors by MET leads to the activation of several signaling cascades including the RAS-ERK, PI3 kinase-AKT, or PLCgamma-PKC. The RAS-ERK activation is associated with the morphogenetic effects while PI3K/AKT coordinates prosurvival effects. During embryonic development, MET signaling plays a role in gastrulation, development and migration of muscles and neuronal precursors, angiogenesis and kidney formation. In adults, participates in wound healing as well as organ regeneration and tissue remodeling. Also promotes differentiation and proliferation of hematopoietic cells. The sequence is that of Hepatocyte growth factor receptor (MET) from Equus caballus (Horse).